Consider the following 745-residue polypeptide: Probable xanthine dehydrogenase subunit D (745 aa).

Mo-molybdopterin contacts are provided by glutamine 204, phenylalanine 235, and alanine 508.

The protein belongs to the xanthine dehydrogenase family. In terms of assembly, could be composed of four subunits: PucA, PucC, PucD and PucE. It depends on Mo-molybdopterin as a cofactor.

It carries out the reaction xanthine + NAD(+) + H2O = urate + NADH + H(+). It catalyses the reaction hypoxanthine + NAD(+) + H2O = xanthine + NADH + H(+). It participates in purine metabolism; hypoxanthine degradation; urate from hypoxanthine: step 1/2. Its pathway is purine metabolism; hypoxanthine degradation; urate from hypoxanthine: step 2/2. Oxidizes hypoxanthine and xanthine to uric acid. The chain is Probable xanthine dehydrogenase subunit D (pucD) from Bacillus subtilis (strain 168).